Here is a 1040-residue protein sequence, read N- to C-terminus: Vacuolar membrane protease (1040 aa).

Residues 1 to 9 are Cytoplasmic-facing; sequence MINPISFRP. Residues 10-30 form a helical membrane-spanning segment; sequence GPVTFWTTLIYLALLIPIVII. The Vacuolar segment spans residues 31 to 405; sequence NEEPPAAPKT…SFVLFGLRGM (375 aa). Residues asparagine 48, asparagine 117, asparagine 120, and asparagine 129 are each glycosylated (N-linked (GlcNAc...) asparagine). Histidine 186 and aspartate 198 together coordinate Zn(2+). Glutamate 232 (proton acceptor) is an active-site residue. Zn(2+)-binding residues include glutamate 233, glutamate 258, and histidine 331. A helical membrane pass occupies residues 406–426; the sequence is FAWSLTLLIATPLILVGITWL. Over 427-436 the chain is Cytoplasmic; sequence LRNLDKDYFF. A helical membrane pass occupies residues 437-456; the sequence is TSTVKTKEHPEYEAVPIGGW. Over 457 to 462 the chain is Vacuolar; the sequence is KGFFRW. A helical transmembrane segment spans residues 463–483; sequence AMMVSIFYFSFWMIMRGANFV. At 484–490 the chain is on the cytoplasmic side; that stretch reads RPSALHR. The chain crosses the membrane as a helical span at residues 491–511; sequence GYANLWLFVFGWIVLVAVTAL. The Vacuolar segment spans residues 512 to 521; the sequence is EDRRRIAAGY. A helical transmembrane segment spans residues 522–542; it reads IFVFLESAIFLSCLISFVELL. Residues 543–715 are Cytoplasmic-facing; the sequence is ALPRKSAYAL…YEHEQDWSGH (173 aa). The disordered stretch occupies residues 563-680; sequence HSGYQGYRDS…NGTNDRGRTT (118 aa). 2 stretches are compositionally biased toward low complexity: residues 577-594 and 616-626; these read SSGA…PSSP and APSVAAHSSQP. Positions 636-647 are enriched in polar residues; that stretch reads GRSTSAPIPSTT. Positions 650–661 are enriched in acidic residues; the sequence is DEDESEDDDDEA. Residues 716 to 736 traverse the membrane as a helical segment; it reads LPSWAWFFQFLLLGPFMIILA. Over 737–758 the chain is Vacuolar; the sequence is AQTGLMLTDAVYQTGSDGSKLF. A helical membrane pass occupies residues 759–779; that stretch reads TPYLMIFFFTLLLILPLTPFI. Residues 780–785 are Cytoplasmic-facing; the sequence is HRVTHH. The chain crosses the membrane as a helical span at residues 786 to 806; that stretch reads IPVFLLVVFIVTLTYNLIAFP. Topologically, residues 807-1040 are vacuolar; that stretch reads FSANNRYKAF…VEGRKAFKIV (234 aa). Asparagine 900 carries N-linked (GlcNAc...) asparagine glycosylation.

The protein belongs to the peptidase M28 family. Requires Zn(2+) as cofactor.

The protein resides in the vacuole membrane. Its function is as follows. May be involved in vacuolar sorting and osmoregulation. In Sordaria macrospora (strain ATCC MYA-333 / DSM 997 / K(L3346) / K-hell), this protein is Vacuolar membrane protease.